The following is a 512-amino-acid chain: Maturase K (512 aa).

It belongs to the intron maturase 2 family. MatK subfamily.

The protein localises to the plastid. It localises to the chloroplast. In terms of biological role, usually encoded in the trnK tRNA gene intron. Probably assists in splicing its own and other chloroplast group II introns. The polypeptide is Maturase K (Koelreuteria paniculata (Goldenrain tree)).